A 107-amino-acid chain; its full sequence is UPF0145 protein Memar_1285 (107 aa).

It belongs to the UPF0145 family.

The polypeptide is UPF0145 protein Memar_1285 (Methanoculleus marisnigri (strain ATCC 35101 / DSM 1498 / JR1)).